Consider the following 250-residue polypeptide: 3-deoxy-manno-octulosonate cytidylyltransferase (250 aa).

It belongs to the KdsB family.

Its subcellular location is the cytoplasm. It carries out the reaction 3-deoxy-alpha-D-manno-oct-2-ulosonate + CTP = CMP-3-deoxy-beta-D-manno-octulosonate + diphosphate. It participates in nucleotide-sugar biosynthesis; CMP-3-deoxy-D-manno-octulosonate biosynthesis; CMP-3-deoxy-D-manno-octulosonate from 3-deoxy-D-manno-octulosonate and CTP: step 1/1. It functions in the pathway bacterial outer membrane biogenesis; lipopolysaccharide biosynthesis. Its function is as follows. Activates KDO (a required 8-carbon sugar) for incorporation into bacterial lipopolysaccharide in Gram-negative bacteria. The sequence is that of 3-deoxy-manno-octulosonate cytidylyltransferase from Actinobacillus pleuropneumoniae serotype 7 (strain AP76).